A 732-amino-acid chain; its full sequence is Zinc-exporting P-type ATPase (732 aa).

Residues 29 to 96 enclose the HMA domain; the sequence is GRMRVRADWV…AIGGAKHVAA (68 aa). The next 6 helical transmembrane spans lie at 105–123, 146–164, 172–186, 195–209, 342–366, and 372–390; these read HSTE…GGAA, MVAT…RGAL, AGTD…IASL, LTVL…YLQD, VGEN…LVTG, and MTML…TPTA. Asp423 functions as the 4-aspartylphosphate intermediate in the catalytic mechanism. Mg(2+) contacts are provided by Asp423, Thr425, and Asp625. Helical transmembrane passes span 676–695 and 705–724; these read AVDV…AAGL and PVLA…ANSS.

The protein belongs to the cation transport ATPase (P-type) (TC 3.A.3) family. Type IB subfamily.

The protein resides in the cell membrane. It carries out the reaction Zn(2+)(in) + ATP + H2O = Zn(2+)(out) + ADP + phosphate + H(+). In terms of biological role, zn(2+) efflux transporter which is involved in detoxification of zinc during infection. This Mycobacterium marinum (strain ATCC BAA-535 / M) protein is Zinc-exporting P-type ATPase.